A 294-amino-acid chain; its full sequence is 33 kDa chaperonin (294 aa).

2 cysteine pairs are disulfide-bonded: Cys-236–Cys-238 and Cys-269–Cys-272.

This sequence belongs to the HSP33 family. Post-translationally, under oxidizing conditions two disulfide bonds are formed involving the reactive cysteines. Under reducing conditions zinc is bound to the reactive cysteines and the protein is inactive.

It localises to the cytoplasm. Functionally, redox regulated molecular chaperone. Protects both thermally unfolding and oxidatively damaged proteins from irreversible aggregation. Plays an important role in the bacterial defense system toward oxidative stress. This Desulfotalea psychrophila (strain LSv54 / DSM 12343) protein is 33 kDa chaperonin.